Reading from the N-terminus, the 374-residue chain is Phosphatidyl-myo-inositol mannosyltransferase (374 aa).

GDP-alpha-D-mannose contacts are provided by Tyr9 and Gly16. A 1,2-diacyl-sn-glycero-3-phospho-(1D-myo-inositol) contacts are provided by residues Gln18, 62–63 (YN), and Arg68. GDP-alpha-D-mannose is bound by residues Arg196, 201–202 (RK), 251–253 (VDD), Lys256, 274–278 (ESFGI), and Glu282.

The protein belongs to the glycosyltransferase group 1 family. Glycosyltransferase 4 subfamily. As to quaternary structure, monomer. Requires Mg(2+) as cofactor.

It is found in the cell membrane. The catalysed reaction is a 1,2-diacyl-sn-glycero-3-phospho-(1D-myo-inositol) + GDP-alpha-D-mannose = a 1,2-diacyl-sn-glycero-3-phospho-[alpha-D-mannopyranosyl-(1&lt;-&gt;6)-D-myo-inositol] + GDP + H(+). It participates in phospholipid metabolism; phosphatidylinositol metabolism. Functionally, involved in the biosynthesis of phosphatidyl-myo-inositol mannosides (PIM) which are early precursors in the biosynthesis of lipomannans (LM) and lipoarabinomannans (LAM). Catalyzes the addition of a mannosyl residue from GDP-D-mannose (GDP-Man) to the position 2 of the carrier lipid phosphatidyl-myo-inositol (PI) to generate a phosphatidyl-myo-inositol bearing an alpha-1,2-linked mannose residue (PIM1). This is Phosphatidyl-myo-inositol mannosyltransferase from Mycobacterium leprae (strain TN).